The following is a 568-amino-acid chain: Sulfite reductase [NADPH] hemoprotein beta-component (568 aa).

Residues cysteine 426, cysteine 432, cysteine 471, and cysteine 475 each coordinate [4Fe-4S] cluster. Cysteine 475 provides a ligand contact to siroheme.

The protein belongs to the nitrite and sulfite reductase 4Fe-4S domain family. As to quaternary structure, alpha(8)-beta(8). The alpha component is a flavoprotein, the beta component is a hemoprotein. Siroheme serves as cofactor. It depends on [4Fe-4S] cluster as a cofactor.

It carries out the reaction hydrogen sulfide + 3 NADP(+) + 3 H2O = sulfite + 3 NADPH + 4 H(+). It functions in the pathway sulfur metabolism; hydrogen sulfide biosynthesis; hydrogen sulfide from sulfite (NADPH route): step 1/1. Functionally, component of the sulfite reductase complex that catalyzes the 6-electron reduction of sulfite to sulfide. This is one of several activities required for the biosynthesis of L-cysteine from sulfate. The polypeptide is Sulfite reductase [NADPH] hemoprotein beta-component (Xylella fastidiosa (strain 9a5c)).